The chain runs to 526 residues: Butyrophilin subfamily 1 member A1 (526 aa).

The N-terminal stretch at 1 to 26 (MAVFPNSCLAGCLLIFILLQLPKLDS) is a signal peptide. Ig-like V-type domains are found at residues 27 to 140 (APFD…VHLK) and 148 to 234 (PHIS…VEVS). Residues 27 to 242 (APFDVIGPQE…VSIPASFFPR (216 aa)) are Extracellular-facing. 2 cysteine pairs are disulfide-bonded: cysteine 50–cysteine 124 and cysteine 164–cysteine 218. N-linked (GlcNAc...) (complex) asparagine glycosylation occurs at asparagine 55. A glycan (N-linked (GlcNAc...) (hybrid) asparagine) is linked at asparagine 215. A helical membrane pass occupies residues 243–269 (LTPWMVAVAVILVVLGLLTIGSIFFTW). Residues 270–526 (RLYKERSRQR…IPLQPSQGVP (257 aa)) are Cytoplasmic-facing. The region spanning 285 to 479 (SKEKLLEELK…LTICPVTDGL (195 aa)) is the B30.2/SPRY domain.

Belongs to the immunoglobulin superfamily. BTN/MOG family. As to quaternary structure, seems to associate with xanthine dehydrogenase/oxidase. As to expression, expressed in mammary tissue.

The protein localises to the membrane. Functionally, may function in the secretion of milk-fat droplets. May act as a specific membrane-associated receptor for the association of cytoplasmic droplets with the apical plasma membrane. Inhibits the proliferation of CD4 and CD8 T-cells activated by anti-CD3 antibodies, T-cell metabolism and IL2 and IFNG secretion. In Bos taurus (Bovine), this protein is Butyrophilin subfamily 1 member A1 (BTN1A1).